A 265-amino-acid chain; its full sequence is Hydroxyethylthiazole kinase (265 aa).

Residue Met-43 coordinates substrate. The ATP site is built by Lys-118 and Thr-165. Gly-192 serves as a coordination point for substrate.

This sequence belongs to the Thz kinase family. Requires Mg(2+) as cofactor.

The enzyme catalyses 5-(2-hydroxyethyl)-4-methylthiazole + ATP = 4-methyl-5-(2-phosphooxyethyl)-thiazole + ADP + H(+). Its pathway is cofactor biosynthesis; thiamine diphosphate biosynthesis; 4-methyl-5-(2-phosphoethyl)-thiazole from 5-(2-hydroxyethyl)-4-methylthiazole: step 1/1. In terms of biological role, catalyzes the phosphorylation of the hydroxyl group of 4-methyl-5-beta-hydroxyethylthiazole (THZ). In Pyrococcus furiosus (strain ATCC 43587 / DSM 3638 / JCM 8422 / Vc1), this protein is Hydroxyethylthiazole kinase.